The chain runs to 506 residues: UDP-glycosyltransferase eriJ (506 aa).

This sequence belongs to the UDP-glycosyltransferase family.

It carries out the reaction 11-O-acetylcyathatriol + UDP-alpha-D-xylose = erinacine Q + UDP + H(+). It catalyses the reaction 11-O-acetylcyathatriol + UDP-alpha-D-glucose = erinacine Q2 + UDP + H(+). It participates in secondary metabolite biosynthesis. Its function is as follows. UDP-glycosyltransferase; part of the gene cluster that mediates the biosynthesis of erinacines, cyathane-xylosides that show unique biological activities, including leishmanicidal activity, stimulating activity for nerve growth-factor synthesis, and agonistic activity toward the kappa opioid receptor. Within the pathway, eriJ tranfers xylose from UDP-xylose onto C-14 of 11-O-acetyl-cyathatriol to form eracine Q, and, at a lower rate, glucose from UDP-D-glucose to produce eracine Q2. The first step of the erinacines biosynthesis pathway is catalyzed by the geranylgeranyl diphosphate (GGPP) synthase eriE via conversion of farnesyl pyrophosphate and isopentyl pyrophosphate into geranylgeranyl pyrophosphate (GGPP). GGPP is then substrate of the diterpene cyclase eriG for the production of cyatha-3,12-diene. The cytochrome P450 monooxygenase eriI then hydroxylates cyatha-3,12-diene at C-14 of the seven-membered ring to produce erinacol, which is further hydroxylated at C-15 by the cytochrome P450 monooxygenase eriC to yield cyathadiol. The cytochrome P450 monooxygenase eriA then catalyzes C-11 hydroxylation in the presence of the short chain dehydrogenase/reductase (SDR) eriH, which leads to the production of cyathatriol. The acetyltransferase eriL converts cyathatriol into 11-O-acetyl-cyathatriol. The SDR eriH catalyzes further oxidation of 11-O-acetyl-cyathatriol into 1-O-acetylcyathin A3. Finally, the glycosyl transferase eriJ tranfers xylose from UDP-xylose onto C-14 of 11-O-acetyl-cyathatriol to form eracine Q. EriJ is also able to convert 11-O-acetyl-cyathatriol to eracine Q2 by using UDP-D-glucose as cosubstrate, but at a lower rate. The chain is UDP-glycosyltransferase eriJ from Hericium erinaceus (Lion's mane mushroom).